The chain runs to 415 residues: Glutamyl-tRNA reductase (415 aa).

Substrate-binding positions include 49 to 52 (TCNR), Ser104, 109 to 111 (EPQ), and Gln115. The active-site Nucleophile is Cys50. Residue 184–189 (GAGEMI) coordinates NADP(+).

Belongs to the glutamyl-tRNA reductase family. As to quaternary structure, homodimer.

The catalysed reaction is (S)-4-amino-5-oxopentanoate + tRNA(Glu) + NADP(+) = L-glutamyl-tRNA(Glu) + NADPH + H(+). It functions in the pathway porphyrin-containing compound metabolism; protoporphyrin-IX biosynthesis; 5-aminolevulinate from L-glutamyl-tRNA(Glu): step 1/2. Catalyzes the NADPH-dependent reduction of glutamyl-tRNA(Glu) to glutamate 1-semialdehyde (GSA). In Neisseria gonorrhoeae (strain ATCC 700825 / FA 1090), this protein is Glutamyl-tRNA reductase.